The sequence spans 87 residues: Phytosulfokines 1 (87 aa).

The signal sequence occupies residues 1–24; sequence MMKTKSEVLIFFFTLVLLLSMASS. Positions 25 to 76 are excised as a propeptide; it reads VILREDGFAPPKPSPTTHEKASTKGDRDGVECKNSDSEEECLVKKTVAAHTD. Positions 31-59 are disordered; that stretch reads GFAPPKPSPTTHEKASTKGDRDGVECKNS. A compositionally biased stretch (basic and acidic residues) spans 41 to 59; the sequence is THEKASTKGDRDGVECKNS. Y77 and Y79 each carry sulfotyrosine. Residues 82 to 87 constitute a propeptide that is removed on maturation; sequence DLNLSP.

Belongs to the phytosulfokine family. Sulfation is important for activity and for the binding to a putative membrane receptor. Post-translationally, PSK-beta is produced from PSK-alpha by exopeptidase digestion. In terms of tissue distribution, expressed only in roots.

Its subcellular location is the secreted. Its function is as follows. Promotes plant cell differentiation, organogenesis and somatic embryogenesis as well as cell proliferation. The polypeptide is Phytosulfokines 1 (PSK1) (Arabidopsis thaliana (Mouse-ear cress)).